The sequence spans 229 residues: Large ribosomal RNA subunit accumulation protein YCED homolog 2, chloroplastic (229 aa).

The transit peptide at 1-42 (MDVRCLISPNLLNSKIKVSGNTHHLPFSSLSKKHQASSPIQA) directs the protein to the chloroplast.

It belongs to the DUF177 domain family.

The protein localises to the plastid. The protein resides in the chloroplast. In terms of biological role, may play a role in synthesis, processing and/or stability of 23S rRNA. This is Large ribosomal RNA subunit accumulation protein YCED homolog 2, chloroplastic from Arabidopsis thaliana (Mouse-ear cress).